The following is a 216-amino-acid chain: Octanoyltransferase (216 aa).

Positions 30–216 (GEAGEAVWLL…KRQFFEVFGA (187 aa)) constitute a BPL/LPL catalytic domain. Substrate-binding positions include 69–76 (RGGQYTYH), 149–151 (AIG), and 162–164 (GLS). The active-site Acyl-thioester intermediate is Cys180.

It belongs to the LipB family.

It is found in the cytoplasm. The enzyme catalyses octanoyl-[ACP] + L-lysyl-[protein] = N(6)-octanoyl-L-lysyl-[protein] + holo-[ACP] + H(+). It functions in the pathway protein modification; protein lipoylation via endogenous pathway; protein N(6)-(lipoyl)lysine from octanoyl-[acyl-carrier-protein]: step 1/2. Its function is as follows. Catalyzes the transfer of endogenously produced octanoic acid from octanoyl-acyl-carrier-protein onto the lipoyl domains of lipoate-dependent enzymes. Lipoyl-ACP can also act as a substrate although octanoyl-ACP is likely to be the physiological substrate. This chain is Octanoyltransferase, found in Jannaschia sp. (strain CCS1).